The sequence spans 509 residues: ATP synthase subunit beta (509 aa).

Residues 1 to 28 form a disordered region; that stretch reads MAKAATPKETAAAKKPAAPKKAASAKTA. ATP is bound at residue 187-194; it reads GGAGVGKT.

The protein belongs to the ATPase alpha/beta chains family. As to quaternary structure, F-type ATPases have 2 components, CF(1) - the catalytic core - and CF(0) - the membrane proton channel. CF(1) has five subunits: alpha(3), beta(3), gamma(1), delta(1), epsilon(1). CF(0) has three main subunits: a(1), b(2) and c(9-12). The alpha and beta chains form an alternating ring which encloses part of the gamma chain. CF(1) is attached to CF(0) by a central stalk formed by the gamma and epsilon chains, while a peripheral stalk is formed by the delta and b chains.

Its subcellular location is the cell inner membrane. The catalysed reaction is ATP + H2O + 4 H(+)(in) = ADP + phosphate + 5 H(+)(out). In terms of biological role, produces ATP from ADP in the presence of a proton gradient across the membrane. The catalytic sites are hosted primarily by the beta subunits. In Sinorhizobium medicae (strain WSM419) (Ensifer medicae), this protein is ATP synthase subunit beta.